The primary structure comprises 56 residues: Ovomucoid (56 aa).

A Kazal-like domain is found at 6-56 (VDCSDHPKPACLQEQKPLCGSDNKTYDNKCSFCNAVVDSNGTLTLSHFGKC). Disulfide bonds link Cys8/Cys38, Cys16/Cys35, and Cys24/Cys56. An N-linked (GlcNAc...) asparagine glycan is attached at Asn45.

The protein resides in the secreted. This is Ovomucoid from Penelope jacquacu (Spix's guan).